Consider the following 194-residue polypeptide: Adenylate kinase (194 aa).

10 to 15 contributes to the ATP binding site; sequence GAGKGT. The segment at 30–59 is NMP; that stretch reads STGDMLRAAVAAGTPVGLKAKAVMESGGLV. Residues threonine 31, arginine 36, 57–59, 85–88, and glutamine 92 contribute to the AMP site; these read GLV and GFPR. Residues 126–142 form an LID region; it reads NRAAEAKAKGEPVRKDD. Arginine 127 lines the ATP pocket. Residues arginine 139 and arginine 150 each contribute to the AMP site. Alanine 178 provides a ligand contact to ATP.

It belongs to the adenylate kinase family. In terms of assembly, monomer.

Its subcellular location is the cytoplasm. It catalyses the reaction AMP + ATP = 2 ADP. The protein operates within purine metabolism; AMP biosynthesis via salvage pathway; AMP from ADP: step 1/1. Functionally, catalyzes the reversible transfer of the terminal phosphate group between ATP and AMP. Plays an important role in cellular energy homeostasis and in adenine nucleotide metabolism. This is Adenylate kinase from Azorhizobium caulinodans (strain ATCC 43989 / DSM 5975 / JCM 20966 / LMG 6465 / NBRC 14845 / NCIMB 13405 / ORS 571).